The sequence spans 507 residues: F-box only protein 31 (507 aa).

Positions 19–42 (RQQRRGPAETAAADSEADTDPEEE) are disordered. Ser33 is subject to Phosphoserine. Acidic residues predominate over residues 33 to 42 (SEADTDPEEE). Thr37 carries the post-translational modification Phosphothreonine. Residues 50-55 (RCSLLE) carry the D box motif. The 47-residue stretch at 50 to 96 (RCSLLELPPELLVEIFASLPGTDLPSLAQVCSRFRRILHTDTIWRRR) folds into the F-box domain. Positions 192, 200, 216, and 222 each coordinate Zn(2+). A Phosphoserine; by ATM modification is found at Ser264. Residues 283 to 285 (DDL) carry the DDL motif motif. The interval 366–417 (EQEAGEGAAPPREPSAKAADGPPAKDGKEPGGGAEAAEQSASSGQGQPFVLP) is disordered. Residues 400-412 (EAAEQSASSGQGQ) are compositionally biased toward low complexity. Phosphoserine is present on Ser448.

Belongs to the FBXO31 family. Part of a SCF (SKP1-cullin-F-box) protein ligase complex SCF(FBXO31) composed of CUL1, SKP1, RBX1 and FBXO31. Interacts (when phosphorylated at Ser-33) with CDC20, promoting ubiquitination by the APC/C complex. Phosphorylation at Ser-264 by ATM following gamma-irradiation results in its stabilization. Phosphorylation at Ser-448 in absence of stress promotes its ubiquitination and degradation by the SCF(FBXO46) complex. Phosphorylation at Ser-33 by AKT1 promotes association with CDC20 and ubiquitination by the APC/C complex. Post-translationally, ubiquitinated by the SCF(FBXO46) complex in absence of stress, promoting its degradation. Ubiquitinated by the APC/C complex following phosphorylation at Ser-33, leading to its degradation by the proteasome.

Its subcellular location is the cytoplasm. The protein localises to the cytoskeleton. The protein resides in the microtubule organizing center. It localises to the centrosome. The protein operates within protein modification; protein ubiquitination. Substrate-recognition component of the SCF(FBXO31) protein ligase complex, which specifically mediates the ubiquitination of proteins amidated at their C-terminus in response to oxidative stress, leading to their degradation by the proteasome. FBXO31 specifically recognizes and binds C-terminal peptides bearing an amide: C-terminal amidation in response to oxidative stress takes place following protein fragmentation. The SCF(FBXO31) also plays a role in G1 arrest following DNA damage by mediating ubiquitination of phosphorylated cyclin-D1 (CCND1), promoting its degradation by the proteasome, resulting in G1 arrest. The SCF(FBXO31) complex is however not a major regulator of CCND1 stability during the G1/S transition. In response to genotoxic stress, the SCF(FBXO31) complex directs ubiquitination and degradation of phosphorylated MDM2, thereby promoting p53/TP53-mediated DNA damage response. SCF(FBXO31) complex is required for genomic integrity by catalyzing ubiquitination and degradation of cyclin-A (CCNA1 and/or CCNA2) during the G1 phase. In response to genotoxic stress, the SCF(FBXO31) complex directs ubiquitination and degradation of phosphorylated FBXO46 and MAP2K6. SCF(FBXO31) complex promotes ubiquitination and degradation of CDT1 during the G2 phase to prevent re-replication. The SCF(FBXO31) complex also mediates ubiquitination and degradation of DUSP6, OGT and PARD6A. This is F-box only protein 31 from Mus musculus (Mouse).